Here is a 147-residue protein sequence, read N- to C-terminus: Basic phospholipase A2 beta-bungarotoxin A1 chain (147 aa).

Residues 1–19 form the signal peptide; sequence MYPAHLLILSAVCVSLLGA. Residues 20–27 constitute a propeptide that is removed on maturation; that stretch reads ANIPPHPL. 6 disulfides stabilise this stretch: cysteine 54/cysteine 146, cysteine 56/cysteine 72, cysteine 71/cysteine 127, cysteine 78/cysteine 120, cysteine 88/cysteine 113, and cysteine 106/cysteine 118. Tyrosine 55, glycine 57, and glycine 59 together coordinate Ca(2+). Residue histidine 75 is part of the active site. Aspartate 76 contacts Ca(2+). The active site involves aspartate 121.

Belongs to the phospholipase A2 family. Group I subfamily. D49 sub-subfamily. As to quaternary structure, heterodimer; disulfide-linked. The A chains have phospholipase A2 activity and the B chains show homology with the basic protease inhibitors. It depends on Ca(2+) as a cofactor. As to expression, expressed by the venom gland.

It localises to the secreted. It catalyses the reaction a 1,2-diacyl-sn-glycero-3-phosphocholine + H2O = a 1-acyl-sn-glycero-3-phosphocholine + a fatty acid + H(+). Its function is as follows. Snake venom phospholipase A2 (PLA2) that inhibits neuromuscular transmission by blocking acetylcholine release from the nerve termini. PLA2 catalyzes the calcium-dependent hydrolysis of the 2-acyl groups in 3-sn-phosphoglycerides. The polypeptide is Basic phospholipase A2 beta-bungarotoxin A1 chain (Bungarus caeruleus (Indian krait)).